Here is a 944-residue protein sequence, read N- to C-terminus: Isoleucine--tRNA ligase (944 aa).

The 'HIGH' region motif lies at 58–68; it reads PYANGDIHIGH. Glutamate 568 serves as a coordination point for L-isoleucyl-5'-AMP. The 'KMSKS' region signature appears at 609-613; the sequence is KMSKS. Residue lysine 612 coordinates ATP. Zn(2+) is bound by residues cysteine 907, cysteine 910, cysteine 927, and cysteine 930.

The protein belongs to the class-I aminoacyl-tRNA synthetase family. IleS type 1 subfamily. Monomer. Requires Zn(2+) as cofactor.

The protein resides in the cytoplasm. The enzyme catalyses tRNA(Ile) + L-isoleucine + ATP = L-isoleucyl-tRNA(Ile) + AMP + diphosphate. In terms of biological role, catalyzes the attachment of isoleucine to tRNA(Ile). As IleRS can inadvertently accommodate and process structurally similar amino acids such as valine, to avoid such errors it has two additional distinct tRNA(Ile)-dependent editing activities. One activity is designated as 'pretransfer' editing and involves the hydrolysis of activated Val-AMP. The other activity is designated 'posttransfer' editing and involves deacylation of mischarged Val-tRNA(Ile). In Psychromonas ingrahamii (strain DSM 17664 / CCUG 51855 / 37), this protein is Isoleucine--tRNA ligase.